Here is an 88-residue protein sequence, read N- to C-terminus: Small ribosomal subunit protein uS15c (88 aa).

Belongs to the universal ribosomal protein uS15 family. In terms of assembly, part of the 30S ribosomal subunit.

It is found in the plastid. Its subcellular location is the chloroplast. This Calycanthus floridus var. glaucus (Eastern sweetshrub) protein is Small ribosomal subunit protein uS15c (rps15).